Consider the following 490-residue polypeptide: Betaine aldehyde dehydrogenase (490 aa).

Positions 27 and 93 each coordinate K(+). Residue 150 to 152 (GAW) coordinates NAD(+). The active-site Charge relay system is Lys162. 176–179 (KPSE) provides a ligand contact to NAD(+). Val180 lines the K(+) pocket. An NAD(+)-binding site is contributed by 230–233 (GTDT). Leu246 contacts K(+). The active-site Proton acceptor is Glu252. NAD(+)-binding residues include Gly254, Cys286, and Glu387. The active-site Nucleophile is the Cys286. Cys286 carries the cysteine sulfenic acid (-SOH) modification. Residues Lys457 and Gly460 each coordinate K(+). Glu464 serves as the catalytic Charge relay system.

This sequence belongs to the aldehyde dehydrogenase family. Dimer of dimers. It depends on K(+) as a cofactor.

The catalysed reaction is betaine aldehyde + NAD(+) + H2O = glycine betaine + NADH + 2 H(+). It participates in amine and polyamine biosynthesis; betaine biosynthesis via choline pathway; betaine from betaine aldehyde: step 1/1. In terms of biological role, involved in the biosynthesis of the osmoprotectant glycine betaine. Catalyzes the irreversible oxidation of betaine aldehyde to the corresponding acid. This Pseudomonas savastanoi pv. phaseolicola (strain 1448A / Race 6) (Pseudomonas syringae pv. phaseolicola (strain 1448A / Race 6)) protein is Betaine aldehyde dehydrogenase.